We begin with the raw amino-acid sequence, 576 residues long: Proline--tRNA ligase (576 aa).

Belongs to the class-II aminoacyl-tRNA synthetase family. ProS type 1 subfamily. Homodimer.

It is found in the cytoplasm. It catalyses the reaction tRNA(Pro) + L-proline + ATP = L-prolyl-tRNA(Pro) + AMP + diphosphate. Catalyzes the attachment of proline to tRNA(Pro) in a two-step reaction: proline is first activated by ATP to form Pro-AMP and then transferred to the acceptor end of tRNA(Pro). As ProRS can inadvertently accommodate and process non-cognate amino acids such as alanine and cysteine, to avoid such errors it has two additional distinct editing activities against alanine. One activity is designated as 'pretransfer' editing and involves the tRNA(Pro)-independent hydrolysis of activated Ala-AMP. The other activity is designated 'posttransfer' editing and involves deacylation of mischarged Ala-tRNA(Pro). The misacylated Cys-tRNA(Pro) is not edited by ProRS. The sequence is that of Proline--tRNA ligase from Psychrobacter sp. (strain PRwf-1).